The following is a 147-amino-acid chain: Large ribosomal subunit protein uL13 (147 aa).

It belongs to the universal ribosomal protein uL13 family. Part of the 50S ribosomal subunit.

This protein is one of the early assembly proteins of the 50S ribosomal subunit, although it is not seen to bind rRNA by itself. It is important during the early stages of 50S assembly. This Nocardioides sp. (strain ATCC BAA-499 / JS614) protein is Large ribosomal subunit protein uL13.